The sequence spans 69 residues: U2-agatoxin-Ao1o (69 aa).

A signal peptide spans 1-20 (MKAIISLLLISAMVFSMFEA). A propeptide spanning residues 21 to 34 (VPVRRRFTAFEGER) is cleaved from the precursor. 3 disulfide bridges follow: cysteine 36-cysteine 52, cysteine 43-cysteine 57, and cysteine 51-cysteine 67. The residue at position 68 (leucine 68) is a Leucine amide.

This sequence belongs to the neurotoxin 01 (U2-agtx) family. In terms of tissue distribution, expressed by the venom gland.

Its subcellular location is the secreted. Insect active toxin causing rapid but reversible paralysis in crickets. No activity shown in mammals. Does not show effect on mammalian voltage-gated calcium channels. The polypeptide is U2-agatoxin-Ao1o (Agelena orientalis (Funnel-web spider)).